The sequence spans 648 residues: Solute carrier family 23 member 2 (648 aa).

The disordered stretch occupies residues 1 to 21; sequence MMGIGKNTASKSVEAGGSTEG. Residues 9–110 are Cytoplasmic-facing; that stretch reads ASKSVEAGGS…LCIFLGLQHY (102 aa). Ser70 is subject to Phosphoserine. At Thr75 the chain carries Phosphothreonine. Position 78 is a phosphoserine (Ser78). Thr79 carries the phosphothreonine modification. Ser81 carries the post-translational modification Phosphoserine. A helical transmembrane segment spans residues 111–131; the sequence is LTCFSGTIAVPFLLADAMCVG. Over 132 to 139 the chain is Extracellular; sequence DDQWATSQ. The chain crosses the membrane as a helical span at residues 140–160; sequence LIGTIFFCVGITTLLQTTFGC. Position 161 (Arg161) is a topological domain, cytoplasmic. The helical transmembrane segment at 162–182 threads the bilayer; that stretch reads LPLFQASAFAFLAPARAILSL. The Extracellular segment spans residues 183–216; it reads DKWKCNTTEITVANGTAELLEHIWHPRIQEIQGA. Residues Asn188 and Asn196 are each glycosylated (N-linked (GlcNAc...) asparagine). The helical transmembrane segment at 217–237 threads the bilayer; it reads IIMSSLIEVVIGLLGLPGALL. The Cytoplasmic portion of the chain corresponds to 238-264; that stretch reads RYIGPLTITPTVALIGLSGFQAAGERA. Residues 265 to 282 form a helical membrane-spanning segment; sequence GKHWGIAMLTIFLVLLFS. At 283–286 the chain is on the extracellular side; the sequence is QYAR. The helical intramembrane region spans 287–300; that stretch reads NVKFPLPIYKSKKG. Topologically, residues 301-307 are extracellular; the sequence is WTAYKFQ. A helical membrane pass occupies residues 308–328; the sequence is LFKMFPIILAILVSWLLCFIF. Residues 329 to 369 are Cytoplasmic-facing; that stretch reads TVTDVFPSNSTDYGYYARTDARKGVLLVAPWFKVPYPFQWG. Residues 370-390 form a helical membrane-spanning segment; it reads MPTVSAAGVIGMLSAVVASII. The Extracellular segment spans residues 391–415; sequence ESIGDYYACARLSCAPPPPIHAINR. The chain crosses the membrane as a helical span at residues 416 to 436; the sequence is GIFVEGLSCVLDGIFGTGNGS. Residues 437-459 are Cytoplasmic-facing; the sequence is TSSSPNIGVLGITKVGSRRVIQY. The helical transmembrane segment at 460–480 threads the bilayer; it reads GAALMLGLGMVGKFSALFASL. Residues 481–483 are Extracellular-facing; that stretch reads PDP. Residues 484-504 traverse the membrane as a helical segment; sequence VLGALFCTLFGMITAVGLSNL. At 505–514 the chain is on the cytoplasmic side; sequence QFIDLNSSRN. Residues 515–535 traverse the membrane as a helical segment; it reads LFVLGFSIFFGLVLPSYLRQN. Over 536–545 the chain is Extracellular; it reads PLVTGITGID. Residues 546–566 form a helical membrane-spanning segment; sequence QILNVLLTTAMFVGGCVAFIL. At 567–648 the chain is on the cytoplasmic side; it reads DNTIPGTPEE…SSDKDSQATV (82 aa). Thr647 is modified (phosphothreonine).

Belongs to the nucleobase:cation symporter-2 (NCS2) (TC 2.A.40) family. Interacts with CLSTN3. Phosphorylated. Expressed in metabolically active and specialized tissues, including high expression in brain and adrenals. Detected in a wide range of tissues. Expression in kidney is almost undetectable.

The protein localises to the cell membrane. The enzyme catalyses L-ascorbate(out) + 2 Na(+)(out) = L-ascorbate(in) + 2 Na(+)(in). Its function is as follows. Sodium/ascorbate cotransporter. Mediates electrogenic uptake of vitamin C, with a stoichiometry of 2 Na(+) for each ascorbate. The protein is Solute carrier family 23 member 2 (Slc23a2) of Mus musculus (Mouse).